The chain runs to 44 residues: Small hydrophobic protein (44 aa).

The Intravirion portion of the chain corresponds to 1–16 (MLPDPEDPESKKATRR). A helical; Signal-anchor for type II membrane protein transmembrane segment spans residues 17–37 (AGNLIICFLFIFFLFVTFIVP). The Virion surface segment spans residues 38 to 44 (TLRHLLS).

Belongs to the rubulavirus small hydrophobic protein family.

It localises to the virion membrane. It is found in the host cell membrane. Functionally, inhibits TNF-alpha signaling and seems to block apoptosis in host infected cells. This Parainfluenza virus 5 (strain W3) (PIV5) protein is Small hydrophobic protein (SH).